A 186-amino-acid polypeptide reads, in one-letter code: Adenylate kinase (186 aa).

10–15 contacts ATP; sequence GSGKGT. The segment at 30–55 is NMP; the sequence is ATGDVFRERMKTDMALRDIVSSGGYV. Residues Thr31, Arg36, 53 to 55, 81 to 84, and Gln88 contribute to the AMP site; these read GYV and GYPR. Residues 122–132 are LID; that stretch reads ARSKESGRTDD. Arg123 lines the ATP pocket. AMP is bound by residues Arg129 and Arg140. Residue Lys168 coordinates ATP.

The protein belongs to the adenylate kinase family. In terms of assembly, monomer.

It is found in the cytoplasm. The catalysed reaction is AMP + ATP = 2 ADP. The protein operates within purine metabolism; AMP biosynthesis via salvage pathway; AMP from ADP: step 1/1. Functionally, catalyzes the reversible transfer of the terminal phosphate group between ATP and AMP. Plays an important role in cellular energy homeostasis and in adenine nucleotide metabolism. The chain is Adenylate kinase from Tropheryma whipplei (strain TW08/27) (Whipple's bacillus).